A 20-amino-acid polypeptide reads, in one-letter code: Cytochrome c oxidase subunit 7B-liver, mitochondrial (20 aa).

Belongs to the cytochrome c oxidase VIIb family. In terms of assembly, component of the cytochrome c oxidase (complex IV, CIV), a multisubunit enzyme composed of 14 subunits. The complex is composed of a catalytic core of 3 subunits MT-CO1, MT-CO2 and MT-CO3, encoded in the mitochondrial DNA, and 11 supernumerary subunits COX4I, COX5A, COX5B, COX6A, COX6B, COX6C, COX7A, COX7B, COX7C, COX8 and NDUFA4, which are encoded in the nuclear genome. The complex exists as a monomer or a dimer and forms supercomplexes (SCs) in the inner mitochondrial membrane with NADH-ubiquinone oxidoreductase (complex I, CI) and ubiquinol-cytochrome c oxidoreductase (cytochrome b-c1 complex, complex III, CIII), resulting in different assemblies (supercomplex SCI(1)III(2)IV(1) and megacomplex MCI(2)III(2)IV(2)).

It localises to the mitochondrion inner membrane. The enzyme catalyses 4 Fe(II)-[cytochrome c] + O2 + 8 H(+)(in) = 4 Fe(III)-[cytochrome c] + 2 H2O + 4 H(+)(out). The protein operates within energy metabolism; oxidative phosphorylation. Functionally, component of the cytochrome c oxidase, the last enzyme in the mitochondrial electron transport chain which drives oxidative phosphorylation. The respiratory chain contains 3 multisubunit complexes succinate dehydrogenase (complex II, CII), ubiquinol-cytochrome c oxidoreductase (cytochrome b-c1 complex, complex III, CIII) and cytochrome c oxidase (complex IV, CIV), that cooperate to transfer electrons derived from NADH and succinate to molecular oxygen, creating an electrochemical gradient over the inner membrane that drives transmembrane transport and the ATP synthase. Cytochrome c oxidase is the component of the respiratory chain that catalyzes the reduction of oxygen to water. Electrons originating from reduced cytochrome c in the intermembrane space (IMS) are transferred via the dinuclear copper A center (CU(A)) of subunit 2 and heme A of subunit 1 to the active site in subunit 1, a binuclear center (BNC) formed by heme A3 and copper B (CU(B)). The BNC reduces molecular oxygen to 2 water molecules using 4 electrons from cytochrome c in the IMS and 4 protons from the mitochondrial matrix. The polypeptide is Cytochrome c oxidase subunit 7B-liver, mitochondrial (Thunnus obesus (Bigeye tuna)).